Consider the following 875-residue polypeptide: Probable dipeptidyl-aminopeptidase B (875 aa).

The segment at 1–90 (MSEPKPIQDT…ASSETTPPRK (90 aa)) is disordered. Residues 1–98 (MSEPKPIQDT…RKGVDRKLKK (98 aa)) are Cytoplasmic-facing. Over residues 19 to 28 (SSISSASTTS) the composition is skewed to low complexity. Basic and acidic residues predominate over residues 33-46 (RLAEESEKNHDASS). The helical; Signal-anchor for type II membrane protein transmembrane segment at 99–119 (VLLIVGGFFVAAWIVSLVVFL) threads the bilayer. At 120-875 (TNKSYKHGSQ…VNDAKPKIES (756 aa)) the chain is on the vacuolar side. Asn-354 and Asn-567 each carry an N-linked (GlcNAc...) asparagine glycan. The interval 689–715 (VDFQSSDGGRRTTRSPRRATGRPSATS) is disordered. Positions 699 to 708 (RTTRSPRRAT) are enriched in basic residues. Residue Ser-726 is the Charge relay system of the active site. Asn-785 carries N-linked (GlcNAc...) asparagine glycosylation. Residues Asp-803 and His-836 each act as charge relay system in the active site.

This sequence belongs to the peptidase S9B family.

It is found in the vacuole membrane. The catalysed reaction is Release of an N-terminal dipeptide, Xaa-Yaa-|-Zaa-, from a polypeptide, preferentially when Yaa is Pro, provided Zaa is neither Pro nor hydroxyproline.. Functionally, type IV dipeptidyl-peptidase which removes N-terminal dipeptides sequentially from polypeptides having unsubstituted N-termini provided that the penultimate residue is proline. The protein is Probable dipeptidyl-aminopeptidase B (DAPB) of Verticillium alfalfae (strain VaMs.102 / ATCC MYA-4576 / FGSC 10136) (Verticillium wilt of alfalfa).